Consider the following 160-residue polypeptide: Small ribosomal subunit protein uS7 (160 aa).

Belongs to the universal ribosomal protein uS7 family. As to quaternary structure, part of the 30S ribosomal subunit. Contacts proteins S9 and S11.

Functionally, one of the primary rRNA binding proteins, it binds directly to 16S rRNA where it nucleates assembly of the head domain of the 30S subunit. Is located at the subunit interface close to the decoding center, probably blocks exit of the E-site tRNA. In Rickettsia conorii (strain ATCC VR-613 / Malish 7), this protein is Small ribosomal subunit protein uS7.